Here is a 236-residue protein sequence, read N- to C-terminus: Ubiquinone biosynthesis O-methyltransferase (236 aa).

S-adenosyl-L-methionine-binding residues include Arg-39, Gly-59, Asp-80, and Met-124.

The protein belongs to the methyltransferase superfamily. UbiG/COQ3 family.

The enzyme catalyses a 3-demethylubiquinol + S-adenosyl-L-methionine = a ubiquinol + S-adenosyl-L-homocysteine + H(+). It catalyses the reaction a 3-(all-trans-polyprenyl)benzene-1,2-diol + S-adenosyl-L-methionine = a 2-methoxy-6-(all-trans-polyprenyl)phenol + S-adenosyl-L-homocysteine + H(+). It functions in the pathway cofactor biosynthesis; ubiquinone biosynthesis. O-methyltransferase that catalyzes the 2 O-methylation steps in the ubiquinone biosynthetic pathway. The sequence is that of Ubiquinone biosynthesis O-methyltransferase from Shewanella baltica (strain OS223).